Reading from the N-terminus, the 907-residue chain is Protein MEI2-like 4 (907 aa).

Positions 28–58 are disordered; the sequence is QFGFMKNNPMPEGGVDRSSNLPTSSWTSDSY. A compositionally biased stretch (polar residues) spans 44-54; the sequence is RSSNLPTSSWT. 2 consecutive RRM domains span residues 211-284 and 295-368; these read RILF…YSIP and GALW…PTCP. The tract at residues 856–907 is disordered; that stretch reads AGPNAGDQEPFPMGSNIRSRPGKHRTNSIENYTNFSSSSDNRDEPANGNDSM. The segment covering 883-894 has biased composition (polar residues); the sequence is SIENYTNFSSSS.

Probable RNA-binding protein that plays a role in meiosis and vegetative growth. This chain is Protein MEI2-like 4 (ML4), found in Arabidopsis thaliana (Mouse-ear cress).